The following is a 607-amino-acid chain: Protein PLASTID MOVEMENT IMPAIRED 2 (607 aa).

Coiled-coil stretches lie at residues 66–295 (KAKK…NAEL) and 329–445 (MLER…ESRR).

This sequence belongs to the WEB family. Interacts with WEB1. As to expression, ubiquitous but preferentially in chloroplast-containing tissues.

The protein resides in the cytoplasm. Functionally, required for the chloroplast avoidance response under high intensity blue light. This avoidance response consists in the relocation of chloroplasts on the anticlinal side of exposed cells. Acts in association with WEB1 to maintain the velocity of chloroplast photorelocation movement via cp-actin filaments regulation. The polypeptide is Protein PLASTID MOVEMENT IMPAIRED 2 (PMI2) (Arabidopsis thaliana (Mouse-ear cress)).